Consider the following 69-residue polypeptide: Magnetosome protein MamI (69 aa).

Over 1 to 2 the chain is Cytoplasmic; it reads MP. A helical membrane pass occupies residues 3–23; sequence SVIFGLLALAIGLLGLTAWWW. Topologically, residues 24–31 are lumenal; sequence SVTEFLRG. The helical transmembrane segment at 32-52 threads the bilayer; that stretch reads AVPVALIIFGLVALAAGVQSV. Over 53 to 69 the chain is Cytoplasmic; it reads RVPPAGKRANSDPNIDG.

This sequence belongs to the magnetosome MamI protein family.

The protein resides in the magnetosome membrane. Its function is as follows. May be involved in an early stage of magnetosome nucleation. Not essential for formation of magnetosome membrane vesicles, it is probably functionally redundant with other proteins. May bind magnetite. One of 7 genes (mamLQBIEMO) able to induce magnetosome membrane biogenesis; coexpression of mamLQRBIEMO in a deletion of the 17 gene mamAB operon restores magnetosome vesicle formation but not magnetite biosynthesis. This chain is Magnetosome protein MamI, found in Magnetospirillum gryphiswaldense (strain DSM 6361 / JCM 21280 / NBRC 15271 / MSR-1).